Consider the following 181-residue polypeptide: Crossover junction endodeoxyribonuclease RuvC (181 aa).

Residues Asp-7, Glu-67, and Asp-139 contribute to the active site. The Mg(2+) site is built by Asp-7, Glu-67, and Asp-139.

Belongs to the RuvC family. In terms of assembly, homodimer which binds Holliday junction (HJ) DNA. The HJ becomes 2-fold symmetrical on binding to RuvC with unstacked arms; it has a different conformation from HJ DNA in complex with RuvA. In the full resolvosome a probable DNA-RuvA(4)-RuvB(12)-RuvC(2) complex forms which resolves the HJ. Mg(2+) is required as a cofactor.

The protein localises to the cytoplasm. The catalysed reaction is Endonucleolytic cleavage at a junction such as a reciprocal single-stranded crossover between two homologous DNA duplexes (Holliday junction).. In terms of biological role, the RuvA-RuvB-RuvC complex processes Holliday junction (HJ) DNA during genetic recombination and DNA repair. Endonuclease that resolves HJ intermediates. Cleaves cruciform DNA by making single-stranded nicks across the HJ at symmetrical positions within the homologous arms, yielding a 5'-phosphate and a 3'-hydroxyl group; requires a central core of homology in the junction. The consensus cleavage sequence is 5'-(A/T)TT(C/G)-3'. Cleavage occurs on the 3'-side of the TT dinucleotide at the point of strand exchange. HJ branch migration catalyzed by RuvA-RuvB allows RuvC to scan DNA until it finds its consensus sequence, where it cleaves and resolves the cruciform DNA. In Bordetella avium (strain 197N), this protein is Crossover junction endodeoxyribonuclease RuvC.